The chain runs to 362 residues: UDP-N-acetylglucosamine--N-acetylmuramyl-(pentapeptide) pyrophosphoryl-undecaprenol N-acetylglucosamine transferase (362 aa).

Residues 21–23, N129, R170, S198, and Q290 each bind UDP-N-acetyl-alpha-D-glucosamine; that span reads TGG.

It belongs to the glycosyltransferase 28 family. MurG subfamily.

It is found in the cell inner membrane. The enzyme catalyses di-trans,octa-cis-undecaprenyl diphospho-N-acetyl-alpha-D-muramoyl-L-alanyl-D-glutamyl-meso-2,6-diaminopimeloyl-D-alanyl-D-alanine + UDP-N-acetyl-alpha-D-glucosamine = di-trans,octa-cis-undecaprenyl diphospho-[N-acetyl-alpha-D-glucosaminyl-(1-&gt;4)]-N-acetyl-alpha-D-muramoyl-L-alanyl-D-glutamyl-meso-2,6-diaminopimeloyl-D-alanyl-D-alanine + UDP + H(+). The protein operates within cell wall biogenesis; peptidoglycan biosynthesis. In terms of biological role, cell wall formation. Catalyzes the transfer of a GlcNAc subunit on undecaprenyl-pyrophosphoryl-MurNAc-pentapeptide (lipid intermediate I) to form undecaprenyl-pyrophosphoryl-MurNAc-(pentapeptide)GlcNAc (lipid intermediate II). The polypeptide is UDP-N-acetylglucosamine--N-acetylmuramyl-(pentapeptide) pyrophosphoryl-undecaprenol N-acetylglucosamine transferase (Synechococcus sp. (strain JA-3-3Ab) (Cyanobacteria bacterium Yellowstone A-Prime)).